The following is an 87-amino-acid chain: Large ribosomal subunit protein bL31B (87 aa).

It belongs to the bacterial ribosomal protein bL31 family. Type B subfamily. As to quaternary structure, part of the 50S ribosomal subunit.

This Burkholderia vietnamiensis (strain G4 / LMG 22486) (Burkholderia cepacia (strain R1808)) protein is Large ribosomal subunit protein bL31B.